Consider the following 330-residue polypeptide: Fructose-1,6-bisphosphatase class 1 (330 aa).

Mg(2+) is bound by residues Glu-84, Asp-103, Leu-105, and Asp-106. Residues 106-109, Asn-196, and Lys-262 contribute to the substrate site; that span reads DGSS. Glu-268 contributes to the Mg(2+) binding site.

Belongs to the FBPase class 1 family. In terms of assembly, homotetramer. The cofactor is Mg(2+).

It localises to the cytoplasm. The catalysed reaction is beta-D-fructose 1,6-bisphosphate + H2O = beta-D-fructose 6-phosphate + phosphate. Its pathway is carbohydrate biosynthesis; gluconeogenesis. This Shewanella putrefaciens (strain CN-32 / ATCC BAA-453) protein is Fructose-1,6-bisphosphatase class 1.